Consider the following 295-residue polypeptide: Tyrosine recombinase XerC (295 aa).

The Core-binding (CB) domain occupies 1–85 (MHILLQKYYN…ALRQFLNYLV (85 aa)). The Tyr recombinase domain maps to 106–285 (YLPKNMDMEQ…DFQHLAQVYD (180 aa)). Catalysis depends on residues Arg145, Lys169, His237, Arg240, and His263. The O-(3'-phospho-DNA)-tyrosine intermediate role is filled by Tyr272.

Belongs to the 'phage' integrase family. XerC subfamily. As to quaternary structure, forms a cyclic heterotetrameric complex composed of two molecules of XerC and two molecules of XerD.

The protein localises to the cytoplasm. Functionally, site-specific tyrosine recombinase, which acts by catalyzing the cutting and rejoining of the recombining DNA molecules. The XerC-XerD complex is essential to convert dimers of the bacterial chromosome into monomers to permit their segregation at cell division. It also contributes to the segregational stability of plasmids. This chain is Tyrosine recombinase XerC, found in Histophilus somni (strain 2336) (Haemophilus somnus).